Reading from the N-terminus, the 245-residue chain is Small ribosomal subunit protein uS3 (245 aa).

The KH type-2 domain occupies 39–111 (IRNFINKNYS…EVFFNVIEIK (73 aa)).

It belongs to the universal ribosomal protein uS3 family. In terms of assembly, part of the 30S ribosomal subunit. Forms a tight complex with proteins S10 and S14.

In terms of biological role, binds the lower part of the 30S subunit head. Binds mRNA in the 70S ribosome, positioning it for translation. In Phytoplasma mali (strain AT), this protein is Small ribosomal subunit protein uS3.